Consider the following 139-residue polypeptide: Endoribonuclease YbeY (139 aa).

Positions 107, 111, and 117 each coordinate Zn(2+).

This sequence belongs to the endoribonuclease YbeY family. Zn(2+) serves as cofactor.

The protein resides in the cytoplasm. In terms of biological role, single strand-specific metallo-endoribonuclease involved in late-stage 70S ribosome quality control and in maturation of the 3' terminus of the 16S rRNA. The chain is Endoribonuclease YbeY from Bacteroides fragilis (strain ATCC 25285 / DSM 2151 / CCUG 4856 / JCM 11019 / LMG 10263 / NCTC 9343 / Onslow / VPI 2553 / EN-2).